A 163-amino-acid polypeptide reads, in one-letter code: UPF0416 protein RBE_0909 (163 aa).

It belongs to the UPF0416 family.

The chain is UPF0416 protein RBE_0909 from Rickettsia bellii (strain RML369-C).